The following is a 138-amino-acid chain: Large ribosomal subunit protein uL16 (138 aa).

Over residues 1-15 (MLSPKKVKYRKKQRG) the composition is skewed to basic residues. Positions 1-20 (MLSPKKVKYRKKQRGRLSGE) are disordered.

The protein belongs to the universal ribosomal protein uL16 family. As to quaternary structure, part of the 50S ribosomal subunit.

Functionally, binds 23S rRNA and is also seen to make contacts with the A and possibly P site tRNAs. This chain is Large ribosomal subunit protein uL16, found in Borrelia hermsii (strain HS1 / DAH).